The following is a 220-amino-acid chain: Kinetochore protein Spc25 (220 aa).

Residues 41 to 119 are a coiled coil; the sequence is ILLDVKEAAA…NEIMERIHTL (79 aa).

This sequence belongs to the SPC25 family. As to quaternary structure, component of the Ndc80 complex, which is composed of Ndc80, Nuf2 and Spc25.

The protein localises to the nucleus. Its subcellular location is the chromosome. The protein resides in the centromere. It localises to the kinetochore. Functionally, acts as a component of the essential kinetochore-associated Ndc80 complex, which is required for chromosome segregation and spindle checkpoint activity during meiosis and mitosis. Required for kinetochore integrity and the organization of stable microtubule binding sites in the outer plate of the kinetochore. Participates in SAC signaling that responds specifically to disruptions in spindle microtubule dynamics. The NDC80 complex synergistically enhances the affinity of the SKA1 complex for microtubules and may allow the NDC80 complex to track depolymerizing microtubules. This is Kinetochore protein Spc25 from Drosophila erecta (Fruit fly).